The sequence spans 628 residues: Pinene synthase, chloroplastic (628 aa).

The transit peptide at 1–36 (MALVSTAPLASKSCLHKSLISSTHELKALSRTIPAL) directs the protein to the chloroplast. Mg(2+)-binding residues include Asp379, Asp383, and Asp531. Positions 379–383 (DDMYD) match the DDXXD motif motif.

It belongs to the terpene synthase family. Tpsd subfamily. Mg(2+) is required as a cofactor. Mn(2+) serves as cofactor. It depends on K(+) as a cofactor.

The protein resides in the plastid. It localises to the chloroplast. It carries out the reaction (2E)-geranyl diphosphate = (1S,5S)-alpha-pinene + diphosphate. It catalyses the reaction (2E)-geranyl diphosphate = (1S,5S)-beta-pinene + diphosphate. It participates in terpene metabolism; oleoresin biosynthesis. In terms of biological role, involved in defensive oleoresin formation in conifers in response to insect attack or other injury. Involved in monoterpene (C10) olefins biosynthesis. A mixture of alpha- and beta-pinene is produced by this enzyme. The protein is Pinene synthase, chloroplastic (ag3) of Abies grandis (Grand fir).